The following is a 484-amino-acid chain: Chromosomal replication initiator protein DnaA (484 aa).

Positions 1-73 (MQEGKNIWSL…EILIEKGHST (73 aa)) are domain I, interacts with DnaA modulators. A domain II region spans residues 73 to 140 (TINVEFIHSQ…EEIHIKYRNP (68 aa)). The segment at 141 to 357 (FLKKKYTFEN…AAVTKLKAHI (217 aa)) is domain III, AAA+ region. Positions 185, 187, 188, and 189 each coordinate ATP. The domain IV, binds dsDNA stretch occupies residues 358–484 (DLEDIEIDTN…IELMNKINKN (127 aa)).

Belongs to the DnaA family. Oligomerizes as a right-handed, spiral filament on DNA at oriC.

It localises to the cytoplasm. Plays an essential role in the initiation and regulation of chromosomal replication. ATP-DnaA binds to the origin of replication (oriC) to initiate formation of the DNA replication initiation complex once per cell cycle. Binds the DnaA box (a 9 base pair repeat at the origin) and separates the double-stranded (ds)DNA. Forms a right-handed helical filament on oriC DNA; dsDNA binds to the exterior of the filament while single-stranded (ss)DNA is stabiized in the filament's interior. The ATP-DnaA-oriC complex binds and stabilizes one strand of the AT-rich DNA unwinding element (DUE), permitting loading of DNA polymerase. After initiation quickly degrades to an ADP-DnaA complex that is not apt for DNA replication. Binds acidic phospholipids. This chain is Chromosomal replication initiator protein DnaA, found in Borrelia duttonii (strain Ly).